Reading from the N-terminus, the 90-residue chain is Putative large ribosomal subunit protein uL23c (90 aa).

The coded by first part of gene stretch occupies residues 1–46 (MDGIKYAVFTDKSIQLLGKKQYTSNVESRSTRTEIKHWVELWNSYE). The segment at 47–90 (MNSHRLPGKGRRMGPIMGHTMHYRRMIITLQSSYSIPPLRKKRT) is coded by second part of gene.

This sequence belongs to the universal ribosomal protein uL23 family. Part of the 50S ribosomal subunit.

Its subcellular location is the plastid. The protein resides in the chloroplast. Its function is as follows. Binds to 23S rRNA. This chain is Putative large ribosomal subunit protein uL23c (rpl23), found in Spinacia oleracea (Spinach).